The chain runs to 360 residues: Squamosa promoter-binding-like protein 7 (360 aa).

A compositionally biased stretch (gly residues) spans 74–89 (AQGSGGGGGGGGGGSA). Residues 74-98 (AQGSGGGGGGGGGGSADQGKRKEKA) are disordered. The segment at 105–182 (VPRCQVEGCD…AGHNERRRRS (78 aa)) adopts an SBP-type zinc-finger fold. Zn(2+) is bound by residues C108, C113, C130, H133, C149, C152, H156, and C168. Residues 165–181 (KKSCRRRLAGHNERRRR) carry the Bipartite nuclear localization signal motif. The span at 172–182 (LAGHNERRRRS) shows a compositional bias: basic residues. 3 disordered regions span residues 172 to 196 (LAGH…AHPH), 261 to 306 (FFSD…HEHQ), and 320 to 360 (AAGG…ARVV).

In terms of tissue distribution, expressed in young panicles.

It is found in the nucleus. Functionally, trans-acting factor that binds specifically to the consensus nucleotide sequence 5'-TNCGTACAA-3'. May be involved in panicle development. In Oryza sativa subsp. indica (Rice), this protein is Squamosa promoter-binding-like protein 7 (SPL7).